An 82-amino-acid chain; its full sequence is RNA-binding protein Hfq (82 aa).

A Sm domain is found at 9–68; it reads DPYLNTLRKERVPVSIYLVNGIKLQGQIESFDQFVILLKNTVSQMVYKHAISTVVPSRPV.

It belongs to the Hfq family. Homohexamer.

Functionally, RNA chaperone that binds small regulatory RNA (sRNAs) and mRNAs to facilitate mRNA translational regulation in response to envelope stress, environmental stress and changes in metabolite concentrations. Also binds with high specificity to tRNAs. The protein is RNA-binding protein Hfq of Pseudomonas aeruginosa (strain LESB58).